The following is an 829-amino-acid chain: Leucine--tRNA ligase (829 aa).

The short motif at 40 to 50 is the 'HIGH' region element; it reads PYPSGNIHMGH. The 'KMSKS' region motif lies at 581-585; the sequence is KMSKS. Lysine 584 is an ATP binding site.

It belongs to the class-I aminoacyl-tRNA synthetase family.

It is found in the cytoplasm. It carries out the reaction tRNA(Leu) + L-leucine + ATP = L-leucyl-tRNA(Leu) + AMP + diphosphate. The polypeptide is Leucine--tRNA ligase (Oleidesulfovibrio alaskensis (strain ATCC BAA-1058 / DSM 17464 / G20) (Desulfovibrio alaskensis)).